A 660-amino-acid polypeptide reads, in one-letter code: tRNA 5-methylaminomethyl-2-thiouridine biosynthesis bifunctional protein MnmC (660 aa).

A tRNA (mnm(5)s(2)U34)-methyltransferase region spans residues 1–242; sequence MTDRIVPATL…KRAMLVGEFA (242 aa). The segment at 266–660 is FAD-dependent cmnm(5)s(2)U34 oxidoreductase; that stretch reads IGAGLAGCAV…VRALRHGRVA (395 aa).

In the N-terminal section; belongs to the methyltransferase superfamily. tRNA (mnm(5)s(2)U34)-methyltransferase family. This sequence in the C-terminal section; belongs to the DAO family. It depends on FAD as a cofactor.

It is found in the cytoplasm. It carries out the reaction 5-aminomethyl-2-thiouridine(34) in tRNA + S-adenosyl-L-methionine = 5-methylaminomethyl-2-thiouridine(34) in tRNA + S-adenosyl-L-homocysteine + H(+). Its function is as follows. Catalyzes the last two steps in the biosynthesis of 5-methylaminomethyl-2-thiouridine (mnm(5)s(2)U) at the wobble position (U34) in tRNA. Catalyzes the FAD-dependent demodification of cmnm(5)s(2)U34 to nm(5)s(2)U34, followed by the transfer of a methyl group from S-adenosyl-L-methionine to nm(5)s(2)U34, to form mnm(5)s(2)U34. The sequence is that of tRNA 5-methylaminomethyl-2-thiouridine biosynthesis bifunctional protein MnmC from Burkholderia pseudomallei (strain 1710b).